A 261-amino-acid polypeptide reads, in one-letter code: Small ribosomal subunit protein eS1 (261 aa).

Positions 1–18 are enriched in basic residues; it reads MAVGKNKRISKGKKGGKK. The segment at 1–23 is disordered; the sequence is MAVGKNKRISKGKKGGKKKAADP.

Belongs to the eukaryotic ribosomal protein eS1 family. In terms of assembly, component of the small ribosomal subunit. Mature ribosomes consist of a small (40S) and a large (60S) subunit. The 40S subunit contains about 33 different proteins and 1 molecule of RNA (18S). The 60S subunit contains about 49 different proteins and 3 molecules of RNA (25S, 5.8S and 5S).

The protein resides in the cytoplasm. The polypeptide is Small ribosomal subunit protein eS1 (cyc07) (Nicotiana tabacum (Common tobacco)).